A 382-amino-acid polypeptide reads, in one-letter code: Dual-specificity RNA methyltransferase RlmN (382 aa).

The active-site Proton acceptor is E96. One can recognise a Radical SAM core domain in the interval 102–342; that stretch reads QGKRGTLCVS…VRTTRGEDID (241 aa). A disulfide bridge links C109 with C345. [4Fe-4S] cluster-binding residues include C116, C120, and C123. S-adenosyl-L-methionine-binding positions include 170–171, S202, 224–226, and N302; these read GE and SLH. The S-methylcysteine intermediate role is filled by C345.

It belongs to the radical SAM superfamily. RlmN family. [4Fe-4S] cluster is required as a cofactor.

The protein localises to the cytoplasm. It catalyses the reaction adenosine(2503) in 23S rRNA + 2 reduced [2Fe-2S]-[ferredoxin] + 2 S-adenosyl-L-methionine = 2-methyladenosine(2503) in 23S rRNA + 5'-deoxyadenosine + L-methionine + 2 oxidized [2Fe-2S]-[ferredoxin] + S-adenosyl-L-homocysteine. It carries out the reaction adenosine(37) in tRNA + 2 reduced [2Fe-2S]-[ferredoxin] + 2 S-adenosyl-L-methionine = 2-methyladenosine(37) in tRNA + 5'-deoxyadenosine + L-methionine + 2 oxidized [2Fe-2S]-[ferredoxin] + S-adenosyl-L-homocysteine. Functionally, specifically methylates position 2 of adenine 2503 in 23S rRNA and position 2 of adenine 37 in tRNAs. m2A2503 modification seems to play a crucial role in the proofreading step occurring at the peptidyl transferase center and thus would serve to optimize ribosomal fidelity. The polypeptide is Dual-specificity RNA methyltransferase RlmN (Pseudomonas syringae pv. tomato (strain ATCC BAA-871 / DC3000)).